The primary structure comprises 107 residues: Quaternary ammonium compound-resistance protein QacC (107 aa).

3 consecutive transmembrane segments (helical) span residues 26–46 (FSKF…FYFL), 57–77 (ITYA…SIII), and 84–104 (LITI…NIFG).

This sequence belongs to the drug/metabolite transporter (DMT) superfamily. Small multidrug resistance (SMR) (TC 2.A.7.1) family.

It is found in the cell membrane. Multidrug exporter. Is implicated for the resistance to bacteriocidal quaternary ammonium compounds. The sequence is that of Quaternary ammonium compound-resistance protein QacC from Staphylococcus sp. (strain ST827).